The chain runs to 181 residues: ATP-dependent protease subunit HslV (181 aa).

The active site involves threonine 9. Residues alanine 166, cysteine 169, and threonine 172 each coordinate Na(+).

This sequence belongs to the peptidase T1B family. HslV subfamily. In terms of assembly, a double ring-shaped homohexamer of HslV is capped on each side by a ring-shaped HslU homohexamer. The assembly of the HslU/HslV complex is dependent on binding of ATP.

It is found in the cytoplasm. It catalyses the reaction ATP-dependent cleavage of peptide bonds with broad specificity.. With respect to regulation, allosterically activated by HslU binding. Its function is as follows. Protease subunit of a proteasome-like degradation complex believed to be a general protein degrading machinery. This chain is ATP-dependent protease subunit HslV, found in Staphylococcus aureus (strain JH1).